We begin with the raw amino-acid sequence, 150 residues long: MHIARFCLLSSMAVLALSAGYVSGAVIEIPDEILDSARFISLYSDGLRQKRQLNLSGPGSEHAGTIRLDGQRNIFDNGRTRVDGTGSYQLDYARGMKPIHGAGLGAEVNHNIWRGRGGQSLDLYGGATRQFNFGNRPNEWGAHGGIRYNF.

Positions 1 to 19 (MHIARFCLLSSMAVLALSA) are cleaved as a signal peptide.

It localises to the secreted. Has antibacterial activity in vitro. The polypeptide is Probable antibacterial peptide (Riptortus clavatus (Bean bug)).